Consider the following 638-residue polypeptide: Pentatricopeptide repeat-containing protein At1g59720, chloroplastic/mitochondrial (638 aa).

A chloroplast and mitochondrion-targeting transit peptide spans 1–40 (MVVRSIIVSPPTTITYYHPMSIGLLVHPLSPHIPPASSPS). PPR repeat units lie at residues 82–112 (TLFL…IENH), 113–148 (SSFM…GESS), 150–184 (DKHT…GFGG), 185–215 (DVYV…MPER), 216–246 (SLVS…MQRS), 250–280 (DGYT…LLRK), 288–318 (DVLV…MQKR), 319–353 (DLAS…RENV), 356–390 (NSVT…YCIE), and 392–422 (ALEH…MPMK). The interval 427-510 (IWRSLLDACC…EPGCSSIEIN (84 aa)) is type E motif. Positions 511 to 541 (GISHEFFAGDTSHPQTKQIYQQLKVIDDRLR) are type E(+) motif. Residues 542–638 (SIGYLPDRSQ…DGSCSCLDYW (97 aa)) form a type DYW motif region.

It belongs to the PPR family. PCMP-H subfamily. In terms of assembly, interacts with ORRM1. Interacts with VAR3/OZ1.

The protein resides in the plastid. It localises to the chloroplast. Its subcellular location is the mitochondrion. In terms of biological role, involved in multiple sites RNA editing events in chloroplasts. Involved in the editing of the site 2 of ndhB (ndhB-2) and site 3 of ndhD (ndhD-3) transcripts, which are two plastid-encoded subunits of the chloroplast NAD(P)H dehydrogenase (NDH) complex. Required for the activity of the NDH complex of the photosynthetic electron transport chain. The chain is Pentatricopeptide repeat-containing protein At1g59720, chloroplastic/mitochondrial (PCMP-H51) from Arabidopsis thaliana (Mouse-ear cress).